The primary structure comprises 226 residues: Cytidylate kinase (226 aa).

Residue 9–17 (GPAGAGKST) coordinates ATP.

Belongs to the cytidylate kinase family. Type 1 subfamily.

The protein resides in the cytoplasm. The enzyme catalyses CMP + ATP = CDP + ADP. It catalyses the reaction dCMP + ATP = dCDP + ADP. This Clostridium tetani (strain Massachusetts / E88) protein is Cytidylate kinase.